Here is a 331-residue protein sequence, read N- to C-terminus: UPF0194 membrane protein YbhG (331 aa).

An N-terminal signal peptide occupies residues 1–19 (MKKPVVIGLAIAAIVTVIA). Residues 107 to 208 (EEIAQAAAAV…LDLQDTTLIA (102 aa)) adopt a coiled-coil conformation.

The protein belongs to the UPF0194 family.

It is found in the periplasm. This chain is UPF0194 membrane protein YbhG, found in Salmonella arizonae (strain ATCC BAA-731 / CDC346-86 / RSK2980).